We begin with the raw amino-acid sequence, 250 residues long: MRVDLNCDLGEAFGNYSFGGDHQIIPLITSANVACGFHAGDENVMNETVKLAKAHNVAVGAHPGLPDLKGFGRRNIDISNDEIYNLMIYQLGALQGFCRIHQVKINHVKPHGALYQMGAKDREIASVIAQAVYDFDPSLVLVGLANSYLISEAKNVGLITASEVFADRRYEDDGQLVSRKESDAVITDTDEALKQVLKMVKENKVISKNNKEVTLQADTICVHGDGEHALLFVSKIREILMKEGIDIQSL.

It belongs to the LamB/PxpA family. Forms a complex composed of PxpA, PxpB and PxpC.

It carries out the reaction 5-oxo-L-proline + ATP + 2 H2O = L-glutamate + ADP + phosphate + H(+). Functionally, catalyzes the cleavage of 5-oxoproline to form L-glutamate coupled to the hydrolysis of ATP to ADP and inorganic phosphate. This is 5-oxoprolinase subunit A from Staphylococcus aureus (strain MW2).